Reading from the N-terminus, the 454-residue chain is tRNA modification GTPase MnmE (454 aa).

Residues Arg23, Glu80, and Lys120 each coordinate (6S)-5-formyl-5,6,7,8-tetrahydrofolate. One can recognise a TrmE-type G domain in the interval 216–377 (GMKVVIAGRP…LRNHLKQSMG (162 aa)). Asn226 serves as a coordination point for K(+). Residues 226–231 (NAGKSS), 245–251 (TDIAGTT), 270–273 (DTAG), 335–338 (NKAD), and 358–360 (SAR) each bind GTP. Position 230 (Ser230) interacts with Mg(2+). K(+) is bound by residues Thr245, Ile247, and Thr250. Mg(2+) is bound at residue Thr251. Lys454 provides a ligand contact to (6S)-5-formyl-5,6,7,8-tetrahydrofolate.

The protein belongs to the TRAFAC class TrmE-Era-EngA-EngB-Septin-like GTPase superfamily. TrmE GTPase family. Homodimer. Heterotetramer of two MnmE and two MnmG subunits. The cofactor is K(+).

The protein localises to the cytoplasm. Its function is as follows. Exhibits a very high intrinsic GTPase hydrolysis rate. Involved in the addition of a carboxymethylaminomethyl (cmnm) group at the wobble position (U34) of certain tRNAs, forming tRNA-cmnm(5)s(2)U34. In Escherichia coli O6:K15:H31 (strain 536 / UPEC), this protein is tRNA modification GTPase MnmE.